The following is a 738-amino-acid chain: NAD(P)H-quinone oxidoreductase subunit 5, chloroplastic (738 aa).

A run of 16 helical transmembrane segments spans residues 9-29 (WIIP…LLLF), 40-60 (WAFP…NLSI), 89-109 (IDPL…MVLI), 125-145 (FASM…SNLI), 147-167 (IYIF…FWFT), 185-205 (GDFG…SFEF), 230-250 (AALL…HVWL), 258-278 (TPIS…FLVA), 280-300 (LLPL…IGII), 327-347 (LGYM…FHLI), 354-374 (ALLF…VGYS), 396-416 (ISFL…CFWS), 425-445 (WLYS…TAFY), 546-566 (LFPL…GIPF), 603-623 (FSVS…KPIY), and 718-738 (YLFF…FPVF).

The protein belongs to the complex I subunit 5 family. In terms of assembly, NDH is composed of at least 16 different subunits, 5 of which are encoded in the nucleus.

The protein localises to the plastid. The protein resides in the chloroplast thylakoid membrane. The catalysed reaction is a plastoquinone + NADH + (n+1) H(+)(in) = a plastoquinol + NAD(+) + n H(+)(out). It catalyses the reaction a plastoquinone + NADPH + (n+1) H(+)(in) = a plastoquinol + NADP(+) + n H(+)(out). Functionally, NDH shuttles electrons from NAD(P)H:plastoquinone, via FMN and iron-sulfur (Fe-S) centers, to quinones in the photosynthetic chain and possibly in a chloroplast respiratory chain. The immediate electron acceptor for the enzyme in this species is believed to be plastoquinone. Couples the redox reaction to proton translocation, and thus conserves the redox energy in a proton gradient. The protein is NAD(P)H-quinone oxidoreductase subunit 5, chloroplastic (ndhF) of Ligustrum vulgare (Common privet).